Consider the following 286-residue polypeptide: ATP synthase gamma chain (286 aa).

It belongs to the ATPase gamma chain family. F-type ATPases have 2 components, CF(1) - the catalytic core - and CF(0) - the membrane proton channel. CF(1) has five subunits: alpha(3), beta(3), gamma(1), delta(1), epsilon(1). CF(0) has three main subunits: a, b and c.

It localises to the cell inner membrane. Functionally, produces ATP from ADP in the presence of a proton gradient across the membrane. The gamma chain is believed to be important in regulating ATPase activity and the flow of protons through the CF(0) complex. The polypeptide is ATP synthase gamma chain (Solibacter usitatus (strain Ellin6076)).